Reading from the N-terminus, the 441-residue chain is Tubulin beta-1 chain (441 aa).

Residues Gln-11, Glu-69, Ser-138, Gly-142, Thr-143, Gly-144, Asn-204, and Asn-226 each coordinate GTP. Glu-69 contributes to the Mg(2+) binding site.

This sequence belongs to the tubulin family. As to quaternary structure, dimer of alpha and beta chains. A typical microtubule is a hollow water-filled tube with an outer diameter of 25 nm and an inner diameter of 15 nM. Alpha-beta heterodimers associate head-to-tail to form protofilaments running lengthwise along the microtubule wall with the beta-tubulin subunit facing the microtubule plus end conferring a structural polarity. Microtubules usually have 13 protofilaments but different protofilament numbers can be found in some organisms and specialized cells. Mg(2+) is required as a cofactor. In terms of tissue distribution, expressed primarily in touch receptor neurons.

It localises to the cytoplasm. The protein localises to the cytoskeleton. TTubulin is the major constituent of microtubules, a cylinder consisting of laterally associated linear protofilaments composed of alpha- and beta-tubulin heterodimers. Microtubules grow by the addition of GTP-tubulin dimers to the microtubule end, where a stabilizing cap forms. Below the cap, tubulin dimers are in GDP-bound state, owing to GTPase activity of alpha-tubulin. Plays a role in mechanosensory transduction (touch sensitivity). In terms of biological role, mec-7 beta-tubulin is required for the production of 15-protofilament microtubules. This is Tubulin beta-1 chain (mec-7) from Caenorhabditis elegans.